The following is a 146-amino-acid chain: Hemoglobin subunit beta (146 aa).

One can recognise a Globin domain in the interval 2 to 146 (HWSAEEKQLI…VAHALARKYH (145 aa)). 2 residues coordinate heme b: His-63 and His-92.

The protein belongs to the globin family. As to quaternary structure, heterotetramer of two alpha chains and two beta chains. As to expression, red blood cells.

In terms of biological role, involved in oxygen transport from the lung to the various peripheral tissues. This is Hemoglobin subunit beta (HBB) from Phasianus colchicus colchicus (Black-necked pheasant).